Consider the following 946-residue polypeptide: Leucine--tRNA ligase (946 aa).

The 'HIGH' region motif lies at 43-53; that stretch reads PYPNGTIHIGH. The 'KMSKS' region signature appears at 638–642; the sequence is KMSKS. K641 lines the ATP pocket.

Belongs to the class-I aminoacyl-tRNA synthetase family.

Its subcellular location is the cytoplasm. It catalyses the reaction tRNA(Leu) + L-leucine + ATP = L-leucyl-tRNA(Leu) + AMP + diphosphate. The chain is Leucine--tRNA ligase from Pyrobaculum calidifontis (strain DSM 21063 / JCM 11548 / VA1).